The chain runs to 375 residues: MSCPVIELTQQLIRRPSLSPDDAGCQALLIERLQAIGFTVERMDFADTQNFWAWRGQGETLAFAGHTDVVPPGDADRWINPPFEPTIRDGMLFGRGAADMKGSLAAMVVAAERFVAQHPNHTGRLAFLITSDEEASAHNGTVKVVEALMARNERLDYCLVGEPSSIEVVGDVVKNGRRGSLTCNLTIHGVQGHVAYPHLADNPVHRAAPFINELVAIEWDQGNEFFPATSMQIANIQAGTGSNNVIPGELFVQFNFRFSTELTDEMIKEQVLALLEKHQLRYTVDWWLSGQPFLTARGKLVDAVVNAVEHYNEIKPQLLTTGGTSDGRFIARMGAQVVELGPVNATIHKINECVNAADLQLLARMYQRIMEQLVA.

Zn(2+) is bound at residue His-66. Residue Asp-68 is part of the active site. Asp-99 provides a ligand contact to Zn(2+). Glu-133 functions as the Proton acceptor in the catalytic mechanism. 3 residues coordinate Zn(2+): Glu-134, Glu-162, and His-348.

Belongs to the peptidase M20A family. DapE subfamily. As to quaternary structure, homodimer. Requires Zn(2+) as cofactor. Co(2+) is required as a cofactor.

The enzyme catalyses N-succinyl-(2S,6S)-2,6-diaminopimelate + H2O = (2S,6S)-2,6-diaminopimelate + succinate. Its pathway is amino-acid biosynthesis; L-lysine biosynthesis via DAP pathway; LL-2,6-diaminopimelate from (S)-tetrahydrodipicolinate (succinylase route): step 3/3. Functionally, catalyzes the hydrolysis of N-succinyl-L,L-diaminopimelic acid (SDAP), forming succinate and LL-2,6-diaminopimelate (DAP), an intermediate involved in the bacterial biosynthesis of lysine and meso-diaminopimelic acid, an essential component of bacterial cell walls. The protein is Succinyl-diaminopimelate desuccinylase of Escherichia coli O6:K15:H31 (strain 536 / UPEC).